The chain runs to 166 residues: MISYKNILIAVDGSHEAEWAFNKAVGVAKRNDAQLTIVNVIDSRTYSSYEVYDAQFTEKSKHFSEELLKGYKEVATNAGVKNVDTRLEFGSPKAIIPKKLARDVGADLIMSGTSGLNAVERFIVGSVSEAIVRHAPCDVLVVRTEEMPEDFQPQVATPQLREKYQD.

Belongs to the universal stress protein A family.

It localises to the cytoplasm. The polypeptide is Putative universal stress protein SE_1385 (Staphylococcus epidermidis (strain ATCC 12228 / FDA PCI 1200)).